Consider the following 336-residue polypeptide: tRNA-dihydrouridine(20/20a) synthase (336 aa).

FMN is bound by residues 24 to 26 and Q77; that span reads PMM. C107 acts as the Proton donor in catalysis. FMN is bound by residues K146, H178, 218–220, and 240–241; these read NGG and GR.

The protein belongs to the Dus family. DusA subfamily. It depends on FMN as a cofactor.

It catalyses the reaction 5,6-dihydrouridine(20) in tRNA + NADP(+) = uridine(20) in tRNA + NADPH + H(+). The catalysed reaction is 5,6-dihydrouridine(20) in tRNA + NAD(+) = uridine(20) in tRNA + NADH + H(+). It carries out the reaction 5,6-dihydrouridine(20a) in tRNA + NADP(+) = uridine(20a) in tRNA + NADPH + H(+). The enzyme catalyses 5,6-dihydrouridine(20a) in tRNA + NAD(+) = uridine(20a) in tRNA + NADH + H(+). Catalyzes the synthesis of 5,6-dihydrouridine (D), a modified base found in the D-loop of most tRNAs, via the reduction of the C5-C6 double bond in target uridines. Specifically modifies U20 and U20a in tRNAs. In Pseudomonas syringae pv. tomato (strain ATCC BAA-871 / DC3000), this protein is tRNA-dihydrouridine(20/20a) synthase.